Consider the following 573-residue polypeptide: Sulfite reductase [NADPH] hemoprotein beta-component (573 aa).

Residues 1–20 (MAKVELKAPDGPPSDVERIK) are disordered. [4Fe-4S] cluster contacts are provided by Cys-438, Cys-444, Cys-483, and Cys-487. Cys-487 provides a ligand contact to siroheme.

It belongs to the nitrite and sulfite reductase 4Fe-4S domain family. As to quaternary structure, alpha(8)-beta(8). The alpha component is a flavoprotein, the beta component is a hemoprotein. Siroheme serves as cofactor. [4Fe-4S] cluster is required as a cofactor.

It carries out the reaction hydrogen sulfide + 3 NADP(+) + 3 H2O = sulfite + 3 NADPH + 4 H(+). It functions in the pathway sulfur metabolism; hydrogen sulfide biosynthesis; hydrogen sulfide from sulfite (NADPH route): step 1/1. Functionally, component of the sulfite reductase complex that catalyzes the 6-electron reduction of sulfite to sulfide. This is one of several activities required for the biosynthesis of L-cysteine from sulfate. This is Sulfite reductase [NADPH] hemoprotein beta-component from Geobacillus kaustophilus (strain HTA426).